We begin with the raw amino-acid sequence, 384 residues long: D-alanine--D-alanine ligase (384 aa).

Residues 167–374 (KKLFAAEGLP…YPTLLATMVD (208 aa)) enclose the ATP-grasp domain. Residue 195–250 (CERLSLPVFVKPARGGSSIGISRVSSWGQLPSAIAYARRHDPKVIVEAAVNGRELE) coordinates ATP. Mg(2+) is bound by residues aspartate 329, glutamate 341, and asparagine 343.

The protein belongs to the D-alanine--D-alanine ligase family. Requires Mg(2+) as cofactor. The cofactor is Mn(2+).

It is found in the cytoplasm. It carries out the reaction 2 D-alanine + ATP = D-alanyl-D-alanine + ADP + phosphate + H(+). It functions in the pathway cell wall biogenesis; peptidoglycan biosynthesis. Its function is as follows. Cell wall formation. In Mycobacterium leprae (strain TN), this protein is D-alanine--D-alanine ligase.